A 433-amino-acid chain; its full sequence is Trigger factor (433 aa).

The PPIase FKBP-type domain occupies 161–246; sequence EDRVVIDFVG…LKKVENIVLP (86 aa).

It belongs to the FKBP-type PPIase family. Tig subfamily.

Its subcellular location is the cytoplasm. The catalysed reaction is [protein]-peptidylproline (omega=180) = [protein]-peptidylproline (omega=0). Its function is as follows. Involved in protein export. Acts as a chaperone by maintaining the newly synthesized protein in an open conformation. Functions as a peptidyl-prolyl cis-trans isomerase. In Actinobacillus pleuropneumoniae serotype 7 (strain AP76), this protein is Trigger factor.